A 564-amino-acid chain; its full sequence is Urocanate hydratase (564 aa).

NAD(+) contacts are provided by residues 54-55 (GG), Q132, 178-180 (GMG), E198, R203, 244-245 (NA), 269-273 (QTSAH), 279-280 (YL), and Y328. C416 is an active-site residue. G498 contacts NAD(+).

This sequence belongs to the urocanase family. As to quaternary structure, homodimer. Requires NAD(+) as cofactor.

The catalysed reaction is 4-imidazolone-5-propanoate = trans-urocanate + H2O. It functions in the pathway amino-acid degradation; L-histidine degradation into L-glutamate; N-formimidoyl-L-glutamate from L-histidine: step 2/3. In Trifolium repens (Creeping white clover), this protein is Urocanate hydratase.